A 192-amino-acid polypeptide reads, in one-letter code: MSQKTDAPLESYEVNGATIAVLPEEIDGKICSKIIEKDCVFYVNMKPLQIVDRSCRFFGSSYAGRKAGTYEVTKISHKPPIMVDPSNQIFLFPTLSSTRPQCGWISHVHVKEFKATEFDDTEVTFSNGKTMELPISYNSFENQVYRTAWLRTKFQDRIDHRVPKRQEFMLYPKEERTKMIYDFILRELGERY.

In terms of biological role, a master regulator required for the expression of late competence genes including comC, comE, comG and the bdbDC operon. Receives signals from SrfA, and possibly other regulatory COM genes, and transduces these signals to the late COM genes. Represses transcription of rok. May repress expression of a few genes. The protein is Competence transcription factor (comK) of Bacillus subtilis (strain 168).